Reading from the N-terminus, the 318-residue chain is Protoheme IX farnesyltransferase (318 aa).

A run of 9 helical transmembrane segments spans residues 27-47 (IMML…GMTG), 52-72 (PAMA…AGAI), 103-123 (LTMG…ASNW), 124-144 (LAAA…TMWL), 152-172 (IVIG…AVTG), 179-199 (WILF…LSLL), 225-245 (ILVY…TGLG), 248-268 (IYGA…VAIL), and 288-308 (AFLF…VEHA).

It belongs to the UbiA prenyltransferase family. Protoheme IX farnesyltransferase subfamily. As to quaternary structure, interacts with CtaA.

The protein resides in the cell inner membrane. It catalyses the reaction heme b + (2E,6E)-farnesyl diphosphate + H2O = Fe(II)-heme o + diphosphate. It functions in the pathway porphyrin-containing compound metabolism; heme O biosynthesis; heme O from protoheme: step 1/1. Functionally, converts heme B (protoheme IX) to heme O by substitution of the vinyl group on carbon 2 of heme B porphyrin ring with a hydroxyethyl farnesyl side group. This chain is Protoheme IX farnesyltransferase, found in Hyphomonas neptunium (strain ATCC 15444).